The following is a 313-amino-acid chain: Small glutamine-rich tetratricopeptide repeat-containing protein alpha (313 aa).

A disordered region spans residues 66 to 100; that stretch reads ATGKEMPQDLRSPARTPPSEEDSAEAERLKTEGNE. Phosphoserine is present on S77. T81 is modified (phosphothreonine). Phosphoserine is present on S84. Basic and acidic residues predominate over residues 90-100; sequence EAERLKTEGNE. TPR repeat units follow at residues 91–124, 125–158, and 159–192; these read AERL…NPAN, AVYF…DPAY, and SKAY…DPDN. K137 carries the post-translational modification N6-acetyllysine. The segment at 250-269 is disordered; sequence MISGGNNPLGTPGTSPSQND. Position 301 is a phosphoserine (S301). T303 bears the Phosphothreonine mark. S305 is subject to Phosphoserine.

The protein belongs to the SGT family. In terms of assembly, homodimer. Homooligomer. Interacts with DNAJC5 and DNAJC5B. Interacts (via TPR repeats) with HSP90AA1. Interacts (via Gln-rich region) with SLC2A1. Interacts with HSP90AB1. Interacts (via TPR repeats) with HSPA8/Hsc70; the interaction is direct. Interacts with BAG6 (via ubiquitin-like domain); interaction prevents interaction between BAG6 and RNF126. Forms a multiprotein complex, at least composed of DNAJB12, DNAJB14, HSPA8/Hsc70 and SGTA; interaction with DNAJB14 and HSPA8/Hsc70 is direct. As to quaternary structure, (Microbial infection) Interacts with Vpu and Gag from HIV-1. (Microbial infection) Interacts with SARS-CoV accessory protein 7a. In terms of tissue distribution, ubiquitous.

The protein localises to the cytoplasm. The protein resides in the nucleus. Co-chaperone that binds misfolded and hydrophobic patches-containing client proteins in the cytosol. Mediates their targeting to the endoplasmic reticulum but also regulates their sorting to the proteasome when targeting fails. Functions in tail-anchored/type II transmembrane proteins membrane insertion constituting with ASNA1 and the BAG6 complex a targeting module. Functions upstream of the BAG6 complex and ASNA1, binding more rapidly the transmembrane domain of newly synthesized proteins. It is also involved in the regulation of the endoplasmic reticulum-associated misfolded protein catabolic process via its interaction with BAG6: collaborates with the BAG6 complex to maintain hydrophobic substrates in non-ubiquitinated states. Competes with RNF126 for interaction with BAG6, preventing the ubiquitination of client proteins associated with the BAG6 complex. Binds directly to HSC70 and HSP70 and regulates their ATPase activity. Its function is as follows. (Microbial infection) In case of infection by polyomavirus, involved in the virus endoplasmic reticulum membrane penetration and infection via interaction with DNAJB12, DNAJB14 and HSPA8/Hsc70. This is Small glutamine-rich tetratricopeptide repeat-containing protein alpha (SGTA) from Homo sapiens (Human).